The following is a 517-amino-acid chain: Crotonobetaine/carnitine--CoA ligase (517 aa).

The protein belongs to the ATP-dependent AMP-binding enzyme family.

The catalysed reaction is 4-(trimethylamino)butanoate + ATP + CoA = 4-(trimethylamino)butanoyl-CoA + AMP + diphosphate. It catalyses the reaction crotonobetaine + ATP + CoA = crotonobetainyl-CoA + AMP + diphosphate. The enzyme catalyses (R)-carnitine + ATP + CoA = (R)-carnitinyl-CoA + AMP + diphosphate. It participates in amine and polyamine metabolism; carnitine metabolism. Functionally, catalyzes the transfer of CoA to carnitine, generating the initial carnitinyl-CoA needed for the CaiB reaction cycle. Also has activity toward crotonobetaine and gamma-butyrobetaine. This Salmonella paratyphi C (strain RKS4594) protein is Crotonobetaine/carnitine--CoA ligase.